The chain runs to 177 residues: NADH-quinone oxidoreductase subunit B (177 aa).

Residues Cys56, Cys57, Cys121, and Cys151 each contribute to the [4Fe-4S] cluster site.

The protein belongs to the complex I 20 kDa subunit family. In terms of assembly, NDH-1 is composed of 14 different subunits. Subunits NuoB, C, D, E, F, and G constitute the peripheral sector of the complex. The cofactor is [4Fe-4S] cluster.

The protein resides in the cell inner membrane. It carries out the reaction a quinone + NADH + 5 H(+)(in) = a quinol + NAD(+) + 4 H(+)(out). Its function is as follows. NDH-1 shuttles electrons from NADH, via FMN and iron-sulfur (Fe-S) centers, to quinones in the respiratory chain. Couples the redox reaction to proton translocation (for every two electrons transferred, four hydrogen ions are translocated across the cytoplasmic membrane), and thus conserves the redox energy in a proton gradient. The polypeptide is NADH-quinone oxidoreductase subunit B (Dinoroseobacter shibae (strain DSM 16493 / NCIMB 14021 / DFL 12)).